The chain runs to 348 residues: tRNA N6-adenosine threonylcarbamoyltransferase (348 aa).

2 residues coordinate Fe cation: H118 and H122. Substrate contacts are provided by residues L140–G144, D173, G186, D190, and N279. Position 309 (D309) interacts with Fe cation.

This sequence belongs to the KAE1 / TsaD family. It depends on Fe(2+) as a cofactor.

It is found in the cytoplasm. The enzyme catalyses L-threonylcarbamoyladenylate + adenosine(37) in tRNA = N(6)-L-threonylcarbamoyladenosine(37) in tRNA + AMP + H(+). Its function is as follows. Required for the formation of a threonylcarbamoyl group on adenosine at position 37 (t(6)A37) in tRNAs that read codons beginning with adenine. Is involved in the transfer of the threonylcarbamoyl moiety of threonylcarbamoyl-AMP (TC-AMP) to the N6 group of A37, together with TsaE and TsaB. TsaD likely plays a direct catalytic role in this reaction. The polypeptide is tRNA N6-adenosine threonylcarbamoyltransferase (Lactiplantibacillus plantarum (strain ATCC BAA-793 / NCIMB 8826 / WCFS1) (Lactobacillus plantarum)).